A 511-amino-acid chain; its full sequence is Histidine ammonia-lyase (511 aa).

The 5-imidazolinone (Ala-Gly) cross-link spans 142–144 (ASG). Ser-143 is subject to 2,3-didehydroalanine (Ser).

Belongs to the PAL/histidase family. Contains an active site 4-methylidene-imidazol-5-one (MIO), which is formed autocatalytically by cyclization and dehydration of residues Ala-Ser-Gly.

It is found in the cytoplasm. The catalysed reaction is L-histidine = trans-urocanate + NH4(+). It participates in amino-acid degradation; L-histidine degradation into L-glutamate; N-formimidoyl-L-glutamate from L-histidine: step 1/3. The polypeptide is Histidine ammonia-lyase (Rhizobium rhizogenes (Agrobacterium rhizogenes)).